Reading from the N-terminus, the 472-residue chain is Uronate isomerase (472 aa).

Belongs to the metallo-dependent hydrolases superfamily. Uronate isomerase family.

It carries out the reaction D-glucuronate = D-fructuronate. The enzyme catalyses aldehydo-D-galacturonate = keto-D-tagaturonate. The protein operates within carbohydrate metabolism; pentose and glucuronate interconversion. This Halalkalibacterium halodurans (strain ATCC BAA-125 / DSM 18197 / FERM 7344 / JCM 9153 / C-125) (Bacillus halodurans) protein is Uronate isomerase.